We begin with the raw amino-acid sequence, 310 residues long: Malate dehydrogenase (310 aa).

NAD(+) is bound by residues 7-12 and Asp32; that span reads GAGNVG. Residues Arg81 and Arg87 each coordinate substrate. NAD(+) is bound by residues Asn94 and 117-119; that span reads VSN. Positions 119 and 150 each coordinate substrate. The Proton acceptor role is filled by His174.

The protein belongs to the LDH/MDH superfamily. MDH type 3 family. Homotetramer; arranged as a dimer of dimers.

It catalyses the reaction (S)-malate + NAD(+) = oxaloacetate + NADH + H(+). Catalyzes the reversible oxidation of malate to oxaloacetate. The protein is Malate dehydrogenase of Chlorobaculum parvum (strain DSM 263 / NCIMB 8327) (Chlorobium vibrioforme subsp. thiosulfatophilum).